Consider the following 550-residue polypeptide: Carnitine transporter (550 aa).

The next 12 helical transmembrane spans lie at 15–35 (FLAV…AIYS), 53–73 (FTTP…GLAF), 92–112 (SWIF…WGFL), 137–157 (VAYS…LASI), 196–216 (MFLL…AVTF), 230–250 (FMTK…SSYV), 263–283 (VCLG…TQFI), 317–337 (WTVF…LFVT), 347–367 (EVIF…FGVF), 401–421 (LLPA…VFLA), 451–471 (LFWC…KAPL), and 477–497 (ATIV…YGLV).

It belongs to the BCCT transporter (TC 2.A.15) family.

It localises to the cell inner membrane. Its activity is regulated as follows. Inhibited by the protonophore 3,3',4',5-tetrachlorosalicylanilide (TCS). Not activated by osmolarity. In terms of biological role, catalyzes the energy-dependent uptake of carnitine and is essential for growth on carnitine. Can also mediate the uptake of choline. Is probably a proton:substrate symporter. The protein is Carnitine transporter of Acinetobacter baumannii (strain ATCC 19606 / DSM 30007 / JCM 6841 / CCUG 19606 / CIP 70.34 / NBRC 109757 / NCIMB 12457 / NCTC 12156 / 81).